A 269-amino-acid polypeptide reads, in one-letter code: Alcohol dehydrogenase-related 31 kDa protein (269 aa).

11–34 provides a ligand contact to NAD(+); sequence YVADCGGIALETCKVLMTKNIAKL. Serine 139 contacts substrate. Tyrosine 152 serves as the catalytic Proton acceptor.

The protein belongs to the short-chain dehydrogenases/reductases (SDR) family.

The protein is Alcohol dehydrogenase-related 31 kDa protein (Adhr) of Drosophila lebanonensis (Fruit fly).